A 246-amino-acid polypeptide reads, in one-letter code: 14-3-3 protein eta (246 aa).

Gly-2 bears the N-acetylglycine mark. Phosphoserine occurs at positions 25 and 59.

The protein belongs to the 14-3-3 family. In terms of assembly, homodimer. Interacts with many nuclear hormone receptors and cofactors including AR, ESR1, ESR2, MC2R, NR3C1, NRIP1, PPARBP and THRA. Interacts with ABL1 (phosphorylated form); the interaction retains it in the cytoplasm. Weakly interacts with CDKN1B. Interacts with ARHGEF28 and CDK16. Interacts with GAB2. Interacts with KCNK18 in a phosphorylation-dependent manner. Interacts with SAMSN1. Interacts with the 'Ser-241' phosphorylated form of PDPK1. Interacts with the 'Thr-369' phosphorylated form of DAPK2. Interacts with PI4KB, TBC1D22A and TBC1D22B. Interacts with SLITRK1. Interacts with MEFV. Post-translationally, phosphorylated on Ser-59 by protein kinase C delta type catalytic subunit in a sphingosine-dependent fashion.

The protein resides in the cytoplasm. Its function is as follows. Adapter protein implicated in the regulation of a large spectrum of both general and specialized signaling pathways. Binds to a large number of partners, usually by recognition of a phosphoserine or phosphothreonine motif. Binding generally results in the modulation of the activity of the binding partner. Negatively regulates the kinase activity of PDPK1. The polypeptide is 14-3-3 protein eta (YWHAH) (Bos taurus (Bovine)).